Here is a 68-residue protein sequence, read N- to C-terminus: DNA-directed RNA polymerase subunit omega (68 aa).

The protein belongs to the RNA polymerase subunit omega family. As to quaternary structure, the RNAP catalytic core consists of 2 alpha, 1 beta, 1 beta' and 1 omega subunit. When a sigma factor is associated with the core the holoenzyme is formed, which can initiate transcription.

The catalysed reaction is RNA(n) + a ribonucleoside 5'-triphosphate = RNA(n+1) + diphosphate. In terms of biological role, promotes RNA polymerase assembly. Latches the N- and C-terminal regions of the beta' subunit thereby facilitating its interaction with the beta and alpha subunits. The chain is DNA-directed RNA polymerase subunit omega from Desulfatibacillum aliphaticivorans.